We begin with the raw amino-acid sequence, 215 residues long: Thymidylate kinase (215 aa).

An ATP-binding site is contributed by 12–19 (GLEGAGKT).

Belongs to the thymidylate kinase family.

It carries out the reaction dTMP + ATP = dTDP + ADP. Its function is as follows. Phosphorylation of dTMP to form dTDP in both de novo and salvage pathways of dTTP synthesis. The sequence is that of Thymidylate kinase from Halorhodospira halophila (strain DSM 244 / SL1) (Ectothiorhodospira halophila (strain DSM 244 / SL1)).